Reading from the N-terminus, the 251-residue chain is Probable transcriptional regulatory protein AAur_2300 (251 aa).

Belongs to the TACO1 family.

It is found in the cytoplasm. In Paenarthrobacter aurescens (strain TC1), this protein is Probable transcriptional regulatory protein AAur_2300.